The following is a 339-amino-acid chain: Probable G-protein coupled receptor 33 (339 aa).

The Extracellular segment spans residues 1–30 (MDLINSSTHVINVSTSLTNSTGVPTPAPKT). N-linked (GlcNAc...) asparagine glycans are attached at residues Asn-5, Asn-12, and Asn-19. The helical transmembrane segment at 31-53 (IIAASLFMAFIIGVISNGLYLWM) threads the bilayer. Residues 54 to 64 (LQFKMQRTVNT) are Cytoplasmic-facing. The chain crosses the membrane as a helical span at residues 65–86 (LLFFHLILSYFISTLILPFMAT). The Extracellular portion of the chain corresponds to 87–103 (SFLQDNHWVFGSVLCKA). Cys-101 and Cys-179 are joined by a disulfide. The helical transmembrane segment at 104 to 124 (FNSTLSVSMFASVFFLSAISV) threads the bilayer. Residues 125-143 (ARYYLILHPVWSQQHRTPH) lie on the Cytoplasmic side of the membrane. The helical transmembrane segment at 144 to 165 (WASRIALQIWISATILSIPYLV) threads the bilayer. Residues 166–209 (FRTTHDDHKGRIKCQNNYIVSTDWESKEHQTLGQWIHAACFVGR) are Extracellular-facing. The helical transmembrane segment at 210–230 (FLLGFLLPFLVIIFCYKRVAT) threads the bilayer. Residues 231–246 (KMKEKGLFKSSKPFKV) lie on the Cytoplasmic side of the membrane. Residues 247-268 (MVTAVISFFVCWMPYHVHSGLV) form a helical membrane-spanning segment. Over 269 to 283 (LTKSQPLPLHLTLGL) the chain is Extracellular. Residues 284–303 (AVVTISFNTVVSPVLYLFTG) form a helical membrane-spanning segment. The Cytoplasmic portion of the chain corresponds to 304–339 (ENFKVFKKSILALFNSTFSDISSTERTQTLNSETEI).

It belongs to the G-protein coupled receptor 1 family. As to expression, expressed predominantly in lung, spleen and testis.

Its subcellular location is the cell membrane. Functionally, orphan receptor; could be a chemoattractant receptor. This Mus musculus (Mouse) protein is Probable G-protein coupled receptor 33 (Gpr33).